Consider the following 302-residue polypeptide: N-acetyl-D-glucosamine kinase (302 aa).

ATP contacts are provided by residues 4-11 and 133-140; these read GFDVGGTK and GFGGGFIY. Residues H157, C177, C179, and C184 each contribute to the Zn(2+) site.

This sequence belongs to the ROK (NagC/XylR) family. NagK subfamily.

The enzyme catalyses N-acetyl-D-glucosamine + ATP = N-acetyl-D-glucosamine 6-phosphate + ADP + H(+). It participates in cell wall biogenesis; peptidoglycan recycling. Functionally, catalyzes the phosphorylation of N-acetyl-D-glucosamine (GlcNAc) derived from cell-wall degradation, yielding GlcNAc-6-P. The chain is N-acetyl-D-glucosamine kinase from Vibrio parahaemolyticus serotype O3:K6 (strain RIMD 2210633).